Consider the following 261-residue polypeptide: Cytochrome c oxidase subunit 3 (261 aa).

Residues 1-15 (MAHQAHSYHMVDPSP) lie on the Mitochondrial matrix side of the membrane. A helical membrane pass occupies residues 16 to 34 (WPIFGATAALLTTSGLIMW). At 35-40 (FHYNSL) the chain is on the mitochondrial intermembrane side. A helical membrane pass occupies residues 41 to 66 (YLLTLGLLSMFLVMIQWWRDIVREST). Over 67 to 72 (FQGHHT) the chain is Mitochondrial matrix. A helical transmembrane segment spans residues 73-105 (PTVQKGLRYGMILFITSEAFFFLGFFWAFFHSS). The Mitochondrial intermembrane portion of the chain corresponds to 106–128 (LAPTPELGAQWPPTGINPLNPLE). Residues 129-152 (VPLLNTAILLASGVTVTWAHHSIT) traverse the membrane as a helical segment. Residues 153–155 (ESN) are Mitochondrial matrix-facing. The helical transmembrane segment at 156-183 (RKQAIHALSLTIILGFYFTALQAMEYHE) threads the bilayer. Residues 184 to 190 (ASFSIAD) lie on the Mitochondrial intermembrane side of the membrane. A helical membrane pass occupies residues 191–223 (GVYGSTFFVATGFHGLHVIIGSSFLTVCLLRLI). The Mitochondrial matrix portion of the chain corresponds to 224–232 (KFHFTTNHH). Residues 233 to 256 (FGFEAAAWYWHFVDVIWLFLYMSI) form a helical membrane-spanning segment. Over 257–261 (YWWGS) the chain is Mitochondrial intermembrane.

It belongs to the cytochrome c oxidase subunit 3 family. In terms of assembly, component of the cytochrome c oxidase (complex IV, CIV), a multisubunit enzyme composed of 14 subunits. The complex is composed of a catalytic core of 3 subunits MT-CO1, MT-CO2 and MT-CO3, encoded in the mitochondrial DNA, and 11 supernumerary subunits COX4I, COX5A, COX5B, COX6A, COX6B, COX6C, COX7A, COX7B, COX7C, COX8 and NDUFA4, which are encoded in the nuclear genome. The complex exists as a monomer or a dimer and forms supercomplexes (SCs) in the inner mitochondrial membrane with NADH-ubiquinone oxidoreductase (complex I, CI) and ubiquinol-cytochrome c oxidoreductase (cytochrome b-c1 complex, complex III, CIII), resulting in different assemblies (supercomplex SCI(1)III(2)IV(1) and megacomplex MCI(2)III(2)IV(2)).

Its subcellular location is the mitochondrion inner membrane. The enzyme catalyses 4 Fe(II)-[cytochrome c] + O2 + 8 H(+)(in) = 4 Fe(III)-[cytochrome c] + 2 H2O + 4 H(+)(out). Its function is as follows. Component of the cytochrome c oxidase, the last enzyme in the mitochondrial electron transport chain which drives oxidative phosphorylation. The respiratory chain contains 3 multisubunit complexes succinate dehydrogenase (complex II, CII), ubiquinol-cytochrome c oxidoreductase (cytochrome b-c1 complex, complex III, CIII) and cytochrome c oxidase (complex IV, CIV), that cooperate to transfer electrons derived from NADH and succinate to molecular oxygen, creating an electrochemical gradient over the inner membrane that drives transmembrane transport and the ATP synthase. Cytochrome c oxidase is the component of the respiratory chain that catalyzes the reduction of oxygen to water. Electrons originating from reduced cytochrome c in the intermembrane space (IMS) are transferred via the dinuclear copper A center (CU(A)) of subunit 2 and heme A of subunit 1 to the active site in subunit 1, a binuclear center (BNC) formed by heme A3 and copper B (CU(B)). The BNC reduces molecular oxygen to 2 water molecules using 4 electrons from cytochrome c in the IMS and 4 protons from the mitochondrial matrix. The chain is Cytochrome c oxidase subunit 3 (MT-CO3) from Struthio camelus (Common ostrich).